The following is a 423-amino-acid chain: Large ribosomal subunit protein mL37 (423 aa).

The transit peptide at 1–29 (MALASGPARRALAGSGQLGLGGFGAPRRG) directs the protein to the mitochondrion.

It belongs to the mitochondrion-specific ribosomal protein mL37 family. In terms of assembly, component of the mitochondrial large ribosomal subunit (mt-LSU). Mature mammalian 55S mitochondrial ribosomes consist of a small (28S) and a large (39S) subunit. The 28S small subunit contains a 12S ribosomal RNA (12S mt-rRNA) and 30 different proteins. The 39S large subunit contains a 16S rRNA (16S mt-rRNA), a copy of mitochondrial valine transfer RNA (mt-tRNA(Val)), which plays an integral structural role, and 52 different proteins. mL37 forms a heterodimer with mL65.

It localises to the mitochondrion. This Homo sapiens (Human) protein is Large ribosomal subunit protein mL37 (MRPL37).